The following is a 178-amino-acid chain: Protein SPEAR1 (178 aa).

Disordered regions lie at residues 1–48 and 139–178; these read MGST…QRGL and HFLNEDPSSTTRRSKSLGSGIQHSGSSENQEVDLELRLSL. The span at 14 to 28 shows a compositional bias: low complexity; sequence SSPPSSSPTSSSSSP. The SPL motif lies at 46-54; the sequence is RGLGVAQLE. The span at 144 to 167 shows a compositional bias: polar residues; the sequence is DPSSTTRRSKSLGSGIQHSGSSEN. Positions 170–176 match the EAR motif; it reads VDLELRL.

In terms of assembly, interacts with SPL and SPEAR2. As to expression, not detected in leaves.

Its function is as follows. Adapter-like transcriptional repressor recruiting TPL/TPR corepressors to inhibit TCP transcription factors. This is Protein SPEAR1 from Arabidopsis thaliana (Mouse-ear cress).